A 426-amino-acid polypeptide reads, in one-letter code: Pannexin-1 (426 aa).

The Cytoplasmic segment spans residues 1-40; the sequence is MAIAQLATEYVFSDFLLKEPTEPKFKGLRLELAVDKMVTC. C40 carries the S-nitrosocysteine modification. A helical transmembrane segment spans residues 41 to 61; it reads IAVGLPLLLISLAFAQEISIG. The Extracellular segment spans residues 62-106; that stretch reads TQISCFSPSSFSWRQAAFVDSYCWAAVQQKNSLQSESGNLPLWLH. Disulfide bonds link C66–C265 and C84–C246. The helical transmembrane segment at 107–127 threads the bilayer; that stretch reads KFFPYILLLFAILLYLPPLFW. Topologically, residues 128-217 are cytoplasmic; it reads RFAAAPHICS…NLIIKYISCR (90 aa). The residue at position 199 (Y199) is a Phosphotyrosine. Residues 218–238 form a helical membrane-spanning segment; that stretch reads LLTLIIILLACIYLGYYFSLS. Residues 239-266 lie on the Extracellular side of the membrane; sequence SLSDEFVCSIKSGILRNDSTVPDQFQCK. Residue N255 is glycosylated (N-linked (GlcNAc...) asparagine). A helical membrane pass occupies residues 267-287; that stretch reads LIAVGIFQLLSVINLVVYVLL. The Cytoplasmic portion of the chain corresponds to 288–426; sequence APVVVYTLFV…ARQRLLDSSC (139 aa). Residue C347 is modified to S-nitrosocysteine. Residues 405–414 show a composition bias toward polar residues; that stretch reads DSETKANNGE. A disordered region spans residues 405–426; sequence DSETKANNGEKNARQRLLDSSC. Residues 415–426 show a composition bias toward basic and acidic residues; that stretch reads KNARQRLLDSSC.

Belongs to the pannexin family. Homoheptameric. In terms of processing, S-nitrosylation inhibits channel currents and ATP release. N-glycosylation plays a role in cell surface targeting. Glycosylation at its extracellular surface makes unlikely that two oligomers could dock to form an intercellular channel such as in gap junctions. Exists in three glycosylation states: non-glycosylated (GLY0), high-mannose glycosylated (GLY1), and fully mature glycosylated (GLY2). Post-translationally, cleaved by CASP3 and CASP7 during apoptosis. Cleavage opens the channel for the release of metabolites and induces plasma membrane permeability during apoptosis. In terms of processing, phosphorylated at Tyr-199 by SRC. Phosphorylation activates ATP release. Constitutively phosphorylated in vascular smooth muscle cells. In terms of tissue distribution, widely expressed. Highest expression is observed in oocytes and brain. Detected at very low levels in sperm cells.

It localises to the cell membrane. The protein resides in the endoplasmic reticulum membrane. It catalyses the reaction chloride(in) = chloride(out). It carries out the reaction iodide(out) = iodide(in). The enzyme catalyses ATP(in) = ATP(out). The catalysed reaction is K(+)(in) = K(+)(out). It catalyses the reaction Ca(2+)(in) = Ca(2+)(out). It carries out the reaction Na(+)(in) = Na(+)(out). The enzyme catalyses nitrate(in) = nitrate(out). The catalysed reaction is L-aspartate(out) = L-aspartate(in). It catalyses the reaction L-glutamate(out) = L-glutamate(in). It carries out the reaction D-gluconate(in) = D-gluconate(out). The enzyme catalyses spermidine(in) = spermidine(out). Ion channel involved in a variety of physiological functions such as blood pressure regulation, apoptotic cell clearance and oogenesis. Forms anion-selective channels with relatively low conductance and an order of permeabilities: nitrate&gt;iodide&gt;chlroride&gt;&gt;aspartate=glutamate=gluconate. Can release ATP upon activation through phosphorylation or cleavage at C-terminus. May play a role as a Ca(2+)-leak channel to regulate ER Ca(2+) homeostasis. Functionally, during apoptosis, the C terminal tail is cleaved by caspases, which opens the main pore acting as a large-pore ATP efflux channel with a broad distribution, which allows the regulated release of molecules and ions smaller than 1 kDa, such as nucleotides ATP and UTP, and selective plasma membrane permeability to attract phagocytes that engulf the dying cells. This Homo sapiens (Human) protein is Pannexin-1.